Here is a 499-residue protein sequence, read N- to C-terminus: Thioredoxin reductase 1, cytoplasmic (499 aa).

FAD is bound by residues 22 to 23, 42 to 43, 58 to 59, and 63 to 67; these read SG, DF, TC, and GCIPK. Residues cysteine 59 and cysteine 64 are joined by a disulfide bond. Lysine 68 carries the post-translational modification N6-succinyllysine. The residue at position 131 (tyrosine 131) is a Phosphotyrosine. Residues 131–132 and threonine 161 each bind FAD; that span reads YG. NADP(+)-binding positions include arginine 166, 198–204, 221–222, arginine 226, 226–228, 292–293, and lysine 315; these read ASYVALE, RS, RGF, and GR. Position 200 (tyrosine 200) interacts with FAD. Residues aspartate 334, 341–343, and histidine 472 contribute to the FAD site; that span reads ELT. Glutamate 341 provides a ligand contact to NADP(+). The active-site Proton acceptor is the histidine 472. The segment at residues 497 to 498 is a cross-link (cysteinyl-selenocysteine (Cys-Sec)); sequence CU. Residue selenocysteine 498 is a non-standard amino acid, selenocysteine.

The protein belongs to the class-I pyridine nucleotide-disulfide oxidoreductase family. As to quaternary structure, homodimer. FAD is required as a cofactor. In terms of processing, ISGylated.

It localises to the cytoplasm. The catalysed reaction is [thioredoxin]-dithiol + NADP(+) = [thioredoxin]-disulfide + NADPH + H(+). It catalyses the reaction H2O2 + NADPH + H(+) = NADP(+) + 2 H2O. Its function is as follows. Reduces disulfideprotein thioredoxin (Trx) to its dithiol-containing form. Homodimeric flavoprotein involved in the regulation of cellular redox reactions, growth and differentiation. Contains a selenocysteine residue at the C-terminal active site that is essential for catalysis. Also has reductase activity on hydrogen peroxide (H2O2). The polypeptide is Thioredoxin reductase 1, cytoplasmic (TXNRD1) (Bos taurus (Bovine)).